We begin with the raw amino-acid sequence, 281 residues long: Diaminopimelate epimerase (281 aa).

Asparagine 13 and asparagine 66 together coordinate substrate. The Proton donor role is filled by cysteine 75. Substrate-binding positions include 76-77 (GN), asparagine 164, asparagine 197, and 215-216 (ER). Cysteine 224 acts as the Proton acceptor in catalysis. Residue 225–226 (GT) participates in substrate binding.

Belongs to the diaminopimelate epimerase family. As to quaternary structure, homodimer.

The protein localises to the cytoplasm. The enzyme catalyses (2S,6S)-2,6-diaminopimelate = meso-2,6-diaminopimelate. It functions in the pathway amino-acid biosynthesis; L-lysine biosynthesis via DAP pathway; DL-2,6-diaminopimelate from LL-2,6-diaminopimelate: step 1/1. Catalyzes the stereoinversion of LL-2,6-diaminopimelate (L,L-DAP) to meso-diaminopimelate (meso-DAP), a precursor of L-lysine and an essential component of the bacterial peptidoglycan. This Microcystis aeruginosa (strain NIES-843 / IAM M-2473) protein is Diaminopimelate epimerase.